The sequence spans 161 residues: Endoribonuclease YbeY (161 aa).

Residues His121, His125, and His131 each contribute to the Zn(2+) site.

The protein belongs to the endoribonuclease YbeY family. It depends on Zn(2+) as a cofactor.

The protein resides in the cytoplasm. Functionally, single strand-specific metallo-endoribonuclease involved in late-stage 70S ribosome quality control and in maturation of the 3' terminus of the 16S rRNA. The chain is Endoribonuclease YbeY from Stenotrophomonas maltophilia (strain K279a).